We begin with the raw amino-acid sequence, 129 residues long: Glycine cleavage system H protein (129 aa).

Residues 24 to 106 (AVRIGLSAYA…HGEGWLLVIQ (83 aa)) enclose the Lipoyl-binding domain. Lysine 65 is subject to N6-lipoyllysine.

Belongs to the GcvH family. As to quaternary structure, the glycine cleavage system is composed of four proteins: P, T, L and H. It depends on (R)-lipoate as a cofactor.

Its function is as follows. The glycine cleavage system catalyzes the degradation of glycine. The H protein shuttles the methylamine group of glycine from the P protein to the T protein. In Synechococcus sp. (strain WH7803), this protein is Glycine cleavage system H protein.